Here is a 389-residue protein sequence, read N- to C-terminus: Galactose-1-phosphate uridylyltransferase (389 aa).

Belongs to the galactose-1-phosphate uridylyltransferase type 2 family.

It is found in the cytoplasm. It carries out the reaction alpha-D-galactose 1-phosphate + UDP-alpha-D-glucose = alpha-D-glucose 1-phosphate + UDP-alpha-D-galactose. The protein operates within carbohydrate metabolism; galactose metabolism. This chain is Galactose-1-phosphate uridylyltransferase (galT), found in Butyrivibrio fibrisolvens.